Consider the following 172-residue polypeptide: Adenine phosphoribosyltransferase (172 aa).

It belongs to the purine/pyrimidine phosphoribosyltransferase family. In terms of assembly, homodimer.

The protein localises to the cytoplasm. It carries out the reaction AMP + diphosphate = 5-phospho-alpha-D-ribose 1-diphosphate + adenine. It functions in the pathway purine metabolism; AMP biosynthesis via salvage pathway; AMP from adenine: step 1/1. In terms of biological role, catalyzes a salvage reaction resulting in the formation of AMP, that is energically less costly than de novo synthesis. The polypeptide is Adenine phosphoribosyltransferase (Trichormus variabilis (strain ATCC 29413 / PCC 7937) (Anabaena variabilis)).